We begin with the raw amino-acid sequence, 632 residues long: MGKIIGIDLGTTNSCVAVMEGNEPVVIANSEGKRTTPSVVAFLNEGQGERKVGDAAKRQAIINPQNTISSIKRFMGKRYSDIAEESKLVPYQLEKGNNDTVRVRIGDRTYTPQEISAMILQKMKTTAEDYLGTTVKEAVITVPAYFNDAERQATKEAGQIAGLEVKRIINEPTAAALAYGLDKKNQDMKIAVFDLGGGTFDISILELGDGVFEVKSTNGDVHLGGDNFDQKLIDWLAEEFKKEESVDLRKDPTALQRLKEAAEKAKIELSGSSTTEVNLPYITAIDGVPKHLVKKITRAQFEQLVDGLVRRTLEPCKKAMQDAGLTVADIDEVILVGGSTRIPKIQEEVEKFFNKKPSKGVNPDEVVAVGAAIQGGVLTGEVKDVLLLDVIPLSFGIETLGGVYTKLIEANTTIPTKKSEVFSTAADSQSSVEIHVLQGERAMARDNRTIGKFHLDGIPPAPRGIPQIEVTFDIDANGILNVSAKDKGTGKEQKIRIEASSGLTDEEIKKMKQEAEANAEADKQEREKVDKLNTADATIFQAQKQLQELGDKIPADTKKSAEDAIEELKKAHEAKDIAAIDTAMSKVNAALQQLYAAAQQAGQAEGQAAQEPSQSTGNAQAEATDAEYEEVK.

Phosphothreonine; by autocatalysis is present on Thr-199. A compositionally biased stretch (low complexity) spans 597–611 (AAQQAGQAEGQAAQE). A disordered region spans residues 597 to 632 (AAQQAGQAEGQAAQEPSQSTGNAQAEATDAEYEEVK). The span at 612–621 (PSQSTGNAQA) shows a compositional bias: polar residues.

It belongs to the heat shock protein 70 family.

Acts as a chaperone. The sequence is that of Chaperone protein DnaK from Amoebophilus asiaticus (strain 5a2).